The following is a 312-amino-acid chain: Serpentine receptor class gamma-31 (312 aa).

7 helical membrane-spanning segments follow: residues 6–26 (LITQ…TVVF), 38–58 (FLKL…NFYI), 92–112 (FIFC…LTSI), 132–152 (TYIL…PLLV), 180–200 (FILV…IICW), 218–238 (LFLV…IAML), and 259–279 (LLSP…LIIF).

The protein belongs to the nematode receptor-like protein srg family.

Its subcellular location is the membrane. The chain is Serpentine receptor class gamma-31 (srg-31) from Caenorhabditis elegans.